The primary structure comprises 274 residues: Protein RecA (274 aa).

ATP is bound at residue 43–50 (GPESSGKT).

This sequence belongs to the RecA family.

Its subcellular location is the cytoplasm. Can catalyze the hydrolysis of ATP in the presence of single-stranded DNA, the ATP-dependent uptake of single-stranded DNA by duplex DNA, and the ATP-dependent hybridization of homologous single-stranded DNAs. It interacts with LexA causing its activation and leading to its autocatalytic cleavage. In Neisseria pharyngis, this protein is Protein RecA.